Here is a 402-residue protein sequence, read N- to C-terminus: Multidrug resistance protein MdtH (402 aa).

The Cytoplasmic segment spans residues 1–12 (MSRVSQARNLGK). The helical transmembrane segment at 13-33 (YFLLIDNMLVVLGFFVVFPLI) threads the bilayer. Over 34-98 (SIRFVDQMGW…GFATMGIAHE (65 aa)) the chain is Periplasmic. A helical transmembrane segment spans residues 99–116 (PWLLWFSCFLSGLGGTLF). Topologically, residues 117–138 (DPPRSALVVKLIRPEQRGRFFS) are cytoplasmic. Residues 139-159 (LLMMQDSAGAVIGALLGSWLL) form a helical membrane-spanning segment. The Periplasmic segment spans residues 160-164 (QYDFR). A helical transmembrane segment spans residues 165–185 (LVCATGAILFILCALFNAWLL). Topologically, residues 186-213 (PAWKLSTARTPVREGMRRVMSNKRFVTY) are cytoplasmic. The chain crosses the membrane as a helical span at residues 214-234 (VLTLAGYYMLAVQVMLMLPIM). The Periplasmic portion of the chain corresponds to 235-243 (VNDIAGSPA). A helical transmembrane segment spans residues 244–264 (AVKWMYAIEACLSLTLLYPIA). Topologically, residues 265 to 276 (RWSEKRFRLEHR) are cytoplasmic. The chain crosses the membrane as a helical span at residues 277–297 (LMAGLLVMSLSMLPIGMVGNL). Topologically, residues 298-299 (QQ) are periplasmic. The chain crosses the membrane as a helical span at residues 300–320 (LFTLICAFYIGSVIAEPARET). The Cytoplasmic portion of the chain corresponds to 321–339 (LSASPADARARGSYMGFSR). The chain crosses the membrane as a helical span at residues 340-360 (LGLAIGGAISYIGGGWLFDMG). At 361 to 367 (KALAQPE) the chain is on the periplasmic side. The chain crosses the membrane as a helical span at residues 368–388 (LPWMMLGIIGFITFLALGWQF). At 389 to 402 (SHKRTPRRMLEPGA) the chain is on the cytoplasmic side.

The protein belongs to the major facilitator superfamily. DHA1 family. MdtH (TC 2.A.1.2.21) subfamily.

It is found in the cell inner membrane. The polypeptide is Multidrug resistance protein MdtH (Salmonella typhi).